Here is a 274-residue protein sequence, read N- to C-terminus: Orotidine 5'-phosphate decarboxylase (274 aa).

Substrate contacts are provided by residues Asp40, 62–64 (KTH), 93–102 (DRKFVDIGNT), Tyr227, and Arg245. Lys95 (proton donor) is an active-site residue.

The protein belongs to the OMP decarboxylase family.

It catalyses the reaction orotidine 5'-phosphate + H(+) = UMP + CO2. It functions in the pathway pyrimidine metabolism; UMP biosynthesis via de novo pathway; UMP from orotate: step 2/2. This Coccidioides posadasii (strain RMSCC 757 / Silveira) (Valley fever fungus) protein is Orotidine 5'-phosphate decarboxylase (URA3).